A 413-amino-acid polypeptide reads, in one-letter code: Serine hydroxymethyltransferase (413 aa).

Residues L119 and 123 to 125 contribute to the (6S)-5,6,7,8-tetrahydrofolate site; that span reads GHL. K228 is subject to N6-(pyridoxal phosphate)lysine. Residue 351–353 coordinates (6S)-5,6,7,8-tetrahydrofolate; the sequence is SPF.

Belongs to the SHMT family. As to quaternary structure, homodimer. Pyridoxal 5'-phosphate serves as cofactor.

It localises to the cytoplasm. It carries out the reaction (6R)-5,10-methylene-5,6,7,8-tetrahydrofolate + glycine + H2O = (6S)-5,6,7,8-tetrahydrofolate + L-serine. It functions in the pathway one-carbon metabolism; tetrahydrofolate interconversion. Its pathway is amino-acid biosynthesis; glycine biosynthesis; glycine from L-serine: step 1/1. Functionally, catalyzes the reversible interconversion of serine and glycine with tetrahydrofolate (THF) serving as the one-carbon carrier. This reaction serves as the major source of one-carbon groups required for the biosynthesis of purines, thymidylate, methionine, and other important biomolecules. Also exhibits THF-independent aldolase activity toward beta-hydroxyamino acids, producing glycine and aldehydes, via a retro-aldol mechanism. This is Serine hydroxymethyltransferase from Clostridium botulinum (strain 657 / Type Ba4).